Reading from the N-terminus, the 756-residue chain is Serine/threonine-protein kinase tousled-like 1-B (756 aa).

Low complexity-rich tracts occupy residues methionine 1–serine 12 and serine 23–proline 34. 2 disordered regions span residues methionine 1–arginine 56 and valine 69–serine 185. Residues glutamate 45 to arginine 56 are compositionally biased toward basic and acidic residues. Positions asparagine 72–lysine 85 are enriched in gly residues. Over residues serine 93–serine 103 the composition is skewed to low complexity. Residues serine 104–arginine 120 show a composition bias toward basic and acidic residues. The stretch at aspartate 243–methionine 268 forms a coiled coil. The tract at residues lysine 339–proline 375 is disordered. A compositionally biased stretch (low complexity) spans serine 347–proline 357. Residues phenylalanine 397–glutamate 435 are a coiled coil. Residues tyrosine 450–leucine 728 form the Protein kinase domain. ATP is bound by residues leucine 456–valine 464 and lysine 479. Aspartate 580 functions as the Proton acceptor in the catalytic mechanism. A disordered region spans residues arginine 734 to tyrosine 756. Positions serine 735–proline 745 are enriched in polar residues.

The protein belongs to the protein kinase superfamily. Ser/Thr protein kinase family. The cofactor is Mg(2+).

It localises to the nucleus. The enzyme catalyses L-seryl-[protein] + ATP = O-phospho-L-seryl-[protein] + ADP + H(+). The catalysed reaction is L-threonyl-[protein] + ATP = O-phospho-L-threonyl-[protein] + ADP + H(+). This chain is Serine/threonine-protein kinase tousled-like 1-B (tlk1b), found in Danio rerio (Zebrafish).